Reading from the N-terminus, the 219-residue chain is Probable 3-beta-hydroxysteroid-Delta(8),Delta(7)-isomerase (219 aa).

4 helical membrane-spanning segments follow: residues 29-49 (ILVPYLATSLFLLLAVWLISG), 62-82 (LMCWWAFTGLTHIIIEGTFVF), 119-139 (VEGITAVLEGPASLLAVYAIA), and 181-201 (FWAYFIGANSSWVVIPTMIAI). Residues 58-200 (TDRWLMCWWA…SWVVIPTMIA (143 aa)) form the EXPERA domain.

It belongs to the EBP family.

Its subcellular location is the endoplasmic reticulum membrane. It catalyses the reaction lathosterol = 5alpha-cholest-8-en-3beta-ol. The protein operates within steroid biosynthesis; sterol biosynthesis. In terms of biological role, catalyzes the conversion of Delta(8)-sterols to their corresponding Delta(7)-isomers. The polypeptide is Probable 3-beta-hydroxysteroid-Delta(8),Delta(7)-isomerase (Oryza sativa subsp. japonica (Rice)).